A 948-amino-acid chain; its full sequence is Isoleucine--tRNA ligase (948 aa).

The 'HIGH' region motif lies at 58–68 (PYANGDIHIGH). L-isoleucyl-5'-AMP is bound at residue Glu566. The short motif at 607-611 (KMSKS) is the 'KMSKS' region element. Lys610 is a binding site for ATP. Zn(2+)-binding residues include Cys911, Cys914, Cys931, and Cys934.

It belongs to the class-I aminoacyl-tRNA synthetase family. IleS type 1 subfamily. As to quaternary structure, monomer. The cofactor is Zn(2+).

It localises to the cytoplasm. It carries out the reaction tRNA(Ile) + L-isoleucine + ATP = L-isoleucyl-tRNA(Ile) + AMP + diphosphate. In terms of biological role, catalyzes the attachment of isoleucine to tRNA(Ile). As IleRS can inadvertently accommodate and process structurally similar amino acids such as valine, to avoid such errors it has two additional distinct tRNA(Ile)-dependent editing activities. One activity is designated as 'pretransfer' editing and involves the hydrolysis of activated Val-AMP. The other activity is designated 'posttransfer' editing and involves deacylation of mischarged Val-tRNA(Ile). The chain is Isoleucine--tRNA ligase from Vibrio vulnificus (strain YJ016).